A 299-amino-acid polypeptide reads, in one-letter code: RING-H2 finger protein ATL20 (299 aa).

Residues 172–192 (LIITLCIIGGITATCIAAIRI) form a helical membrane-spanning segment. An RING-type; atypical zinc finger spans residues 253–295 (CPICLSEYASKETVRCMPECDHCFHVQCIDEWLKIHSSCPVCR).

It belongs to the RING-type zinc finger family. ATL subfamily.

It localises to the membrane. It catalyses the reaction S-ubiquitinyl-[E2 ubiquitin-conjugating enzyme]-L-cysteine + [acceptor protein]-L-lysine = [E2 ubiquitin-conjugating enzyme]-L-cysteine + N(6)-ubiquitinyl-[acceptor protein]-L-lysine.. It functions in the pathway protein modification; protein ubiquitination. The protein is RING-H2 finger protein ATL20 (ATL20) of Arabidopsis thaliana (Mouse-ear cress).